The following is a 295-amino-acid chain: Sperm acrosome membrane-associated protein 1 (295 aa).

A signal peptide spans 1-29 (MSPGGAGCSAGLLLTVGWLLLAGLQSTCG). Residues 30 to 220 (INVTAVQDPS…SRPDTDAVLV (191 aa)) are Extracellular-facing. The interval 39–71 (SLVSEGENEGEEEAENDSEVENEPQAEAEQDVS) is disordered. Residues 44–68 (GENEGEEEAENDSEVENEPQAEAEQ) are compositionally biased toward acidic residues. An N-linked (GlcNAc...) asparagine glycan is attached at Asn-72. The chain crosses the membrane as a helical span at residues 221–241 (FVLTIGVIICIFVIFVLIFII). Over 242 to 295 (VNWATVKDFWASKASTTEIQSELSSMKYKDSTSLDQSPTEIPGHEDDALSEWNE) the chain is Cytoplasmic. The residue at position 256 (Ser-256) is a Phosphoserine. Residues 263–295 (ELSSMKYKDSTSLDQSPTEIPGHEDDALSEWNE) form a disordered region. Tyr-269 carries the phosphotyrosine modification. Phosphoserine is present on residues Ser-278 and Ser-291.

As to quaternary structure, interacts with CYLC1; the interaction may be relevant for proper acrosome attachment to the nuclear envelope. Post-translationally, N-glycosylated. Detected in spermatozoa (at protein level).

It is found in the cytoplasmic vesicle. The protein localises to the secretory vesicle. The protein resides in the acrosome inner membrane. In terms of biological role, plays a role in acrosome expansion and establishment of normal sperm morphology during spermatogenesis. Important for male fertility. The chain is Sperm acrosome membrane-associated protein 1 from Sus scrofa (Pig).